Consider the following 284-residue polypeptide: UPF0294 protein VV1_1880 (284 aa).

It belongs to the UPF0294 family.

The protein resides in the cytoplasm. The sequence is that of UPF0294 protein VV1_1880 from Vibrio vulnificus (strain CMCP6).